A 173-amino-acid polypeptide reads, in one-letter code: Crossover junction endodeoxyribonuclease RuvC (173 aa).

Catalysis depends on residues aspartate 8, glutamate 67, and aspartate 139. Residues aspartate 8, glutamate 67, and aspartate 139 each contribute to the Mg(2+) site.

It belongs to the RuvC family. As to quaternary structure, homodimer which binds Holliday junction (HJ) DNA. The HJ becomes 2-fold symmetrical on binding to RuvC with unstacked arms; it has a different conformation from HJ DNA in complex with RuvA. In the full resolvosome a probable DNA-RuvA(4)-RuvB(12)-RuvC(2) complex forms which resolves the HJ. The cofactor is Mg(2+).

Its subcellular location is the cytoplasm. The catalysed reaction is Endonucleolytic cleavage at a junction such as a reciprocal single-stranded crossover between two homologous DNA duplexes (Holliday junction).. In terms of biological role, the RuvA-RuvB-RuvC complex processes Holliday junction (HJ) DNA during genetic recombination and DNA repair. Endonuclease that resolves HJ intermediates. Cleaves cruciform DNA by making single-stranded nicks across the HJ at symmetrical positions within the homologous arms, yielding a 5'-phosphate and a 3'-hydroxyl group; requires a central core of homology in the junction. The consensus cleavage sequence is 5'-(A/T)TT(C/G)-3'. Cleavage occurs on the 3'-side of the TT dinucleotide at the point of strand exchange. HJ branch migration catalyzed by RuvA-RuvB allows RuvC to scan DNA until it finds its consensus sequence, where it cleaves and resolves the cruciform DNA. The chain is Crossover junction endodeoxyribonuclease RuvC from Photorhabdus laumondii subsp. laumondii (strain DSM 15139 / CIP 105565 / TT01) (Photorhabdus luminescens subsp. laumondii).